Here is a 202-residue protein sequence, read N- to C-terminus: MYTVMLDLKGRSVLVVGGGTIATRRIKGFLQEGAAITVVAPTVSAEINEWEAKGQLRVKRKKVGEEDLLNVFFIVVATNDQAVNKFVKQHIKNDQLVNMASSFSDGNIQIPAQFSRGRLSLAISTDGASPLLTKRIKEDLSSNYDESYTQYTQFLYECRVLIHRLNVSKSRKHELLTEIIDDQYRLSLVKQREFLQQIEKYK.

Residues 20 to 21 and 41 to 42 each bind NAD(+); these read TI and PT.

Belongs to the precorrin-2 dehydrogenase / sirohydrochlorin ferrochelatase family. As to quaternary structure, homodimer.

The catalysed reaction is precorrin-2 + NAD(+) = sirohydrochlorin + NADH + 2 H(+). It participates in cofactor biosynthesis; adenosylcobalamin biosynthesis; sirohydrochlorin from precorrin-2: step 1/1. It functions in the pathway porphyrin-containing compound metabolism; siroheme biosynthesis; sirohydrochlorin from precorrin-2: step 1/1. Catalyzes the dehydrogenation of precorrin-2 to form sirohydrochlorin which is used as a precursor in both siroheme biosynthesis and in the anaerobic branch of adenosylcobalamin biosynthesis. It is unable to oxidize precorrin-3. This chain is Precorrin-2 dehydrogenase (sirC), found in Priestia megaterium (Bacillus megaterium).